The primary structure comprises 109 residues: METLLWKDAREKIKKGVNFVEFAAPWCPDCVMMKPVIEQVEQEIKNLNLPVNFYHVNADESGMFRKADAEVAVLRIPTHYIVKDGKQVFIGYEYFPKHILVEKIKELFK.

The 108-residue stretch at 2-109 (ETLLWKDARE…LVEKIKELFK (108 aa)) folds into the Thioredoxin domain. The cysteines at positions 27 and 30 are disulfide-linked.

It belongs to the thioredoxin family.

Functionally, participates in various redox reactions through the reversible oxidation of its active center dithiol to a disulfide and catalyzes dithiol-disulfide exchange reactions. The chain is Thioredoxin (trxA) from Mycoplasmopsis pulmonis (strain UAB CTIP) (Mycoplasma pulmonis).